The following is a 908-amino-acid chain: Protein translocase subunit SecA (908 aa).

ATP is bound by residues Gln87, 105–109 (GEGKT), and Asp494. A disordered region spans residues 871-908 (QEFSGGNLNRSQSNGSSVTVTTSSGGGTERKTSRRRKR). Over residues 874-884 (SGGNLNRSQSN) the composition is skewed to polar residues.

Belongs to the SecA family. Monomer and homodimer. Part of the essential Sec protein translocation apparatus which comprises SecA, SecYEG and auxiliary proteins SecDF. Other proteins may also be involved.

The protein resides in the cell inner membrane. The protein localises to the cytoplasm. The catalysed reaction is ATP + H2O + cellular proteinSide 1 = ADP + phosphate + cellular proteinSide 2.. Part of the Sec protein translocase complex. Interacts with the SecYEG preprotein conducting channel. Has a central role in coupling the hydrolysis of ATP to the transfer of proteins into and across the cell membrane, serving as an ATP-driven molecular motor driving the stepwise translocation of polypeptide chains across the membrane. This chain is Protein translocase subunit SecA, found in Leptospira interrogans serogroup Icterohaemorrhagiae serovar Lai (strain 56601).